We begin with the raw amino-acid sequence, 523 residues long: 2-isopropylmalate synthase (523 aa).

One can recognise a Pyruvate carboxyltransferase domain in the interval 5–267 (VIIFDTTLRD…ETGINAKEIH (263 aa)). Mn(2+) contacts are provided by Asp-14, His-202, His-204, and Asn-238. A regulatory domain region spans residues 392–523 (KLQQLVVHSD…QQEKQVLGGV (132 aa)).

It belongs to the alpha-IPM synthase/homocitrate synthase family. LeuA type 1 subfamily. As to quaternary structure, homodimer. Mn(2+) is required as a cofactor.

It localises to the cytoplasm. The catalysed reaction is 3-methyl-2-oxobutanoate + acetyl-CoA + H2O = (2S)-2-isopropylmalate + CoA + H(+). It participates in amino-acid biosynthesis; L-leucine biosynthesis; L-leucine from 3-methyl-2-oxobutanoate: step 1/4. Catalyzes the condensation of the acetyl group of acetyl-CoA with 3-methyl-2-oxobutanoate (2-ketoisovalerate) to form 3-carboxy-3-hydroxy-4-methylpentanoate (2-isopropylmalate). The polypeptide is 2-isopropylmalate synthase (Shewanella piezotolerans (strain WP3 / JCM 13877)).